The primary structure comprises 1738 residues: Complement C4-B (1738 aa).

The N-terminal stretch at 1 to 19 is a signal peptide; it reads MRLLWGLAWVFSFCASSLQ. Cysteine 66 and cysteine 95 are oxidised to a cystine. Residue asparagine 224 is glycosylated (N-linked (GlcNAc...) asparagine). Cysteine 633 and cysteine 667 form a disulfide bridge. Positions 674–677 are excised as a propeptide; that stretch reads RQKR. Disulfide bonds link cysteine 700/cysteine 726, cysteine 701/cysteine 733, and cysteine 714/cysteine 734. Residues 700–734 form the Anaphylatoxin-like domain; the sequence is CCQDGMTKLPMKRTCEQRAARVPQQACREPFLSCC. Residue asparagine 743 is glycosylated (N-linked (GlcNAc...) asparagine). Positions 1006–1009 form a cross-link, isoglutamyl cysteine thioester (Cys-Gln); the sequence is CAEQ. 2 N-linked (GlcNAc...) asparagine glycosylation sites follow: asparagine 1324 and asparagine 1387. A sulfotyrosine mark is found at tyrosine 1413, tyrosine 1416, and tyrosine 1417. Residues 1444-1447 constitute a propeptide that is removed on maturation; it reads RRRR. Disulfide bonds link cysteine 1465-cysteine 1529, cysteine 1577-cysteine 1582, cysteine 1589-cysteine 1667, cysteine 1612-cysteine 1736, and cysteine 1712-cysteine 1721. The NTR domain maps to 1589-1736; sequence CPRLLRSLER…FLMEFSSRGC (148 aa).

In absence of complement activation, circulates in blood as a disulfide-linked trimer of an alpha, beta and gamma chain. As to quaternary structure, complement C4b is composed of complement C4b-A, complement C4 beta and complement C4 gamma chains that are associated via disulfide bonds. Non-enzymatic component of the C3 convertase, also named C4bC2b, composed of the serine protease complement C2b (C2), as well as complement C4b. Non-enzymatic component of the C5 convertase, also named C4bC2bC3b, composed of the serine protease complement C2b (C2), complement C3b, as well as complement C4b. In terms of processing, prior to secretion, the single-chain precursor is enzymatically cleaved by plasminogen (PLG) to yield non-identical chains alpha, beta and gamma. During activation of the complement systems, the alpha chain is cleaved into C4a and C4b by different proteases depending on the complement pathway: C4b stays linked to the beta and gamma chains, while C4a is released in the plasma. The alpha chain is cleaved by C1S to generate C4a and C4b following activation by the classical complement system. The alpha chain is cleaved to generate C4a and C4b by MASP2 following activation by the lectin complement system. The alpha chain is cleaved by GZMK to generate C4a and C4b following activation by the GZMK complement system. Further degradation of C4b by C1 into the inactive fragments C4c and C4d blocks the generation of C3 convertase. The proteolytic cleavages often are incomplete so that many structural forms can be found in plasma. Upon activation, the internal thioester bond reacts with carbohydrate antigens on the target surface to form amide or ester bonds, leading to covalent association with the surface of pathogens. Post-translationally, complement C4b interacts with complement C3b via a thioester linkage.

The protein localises to the secreted. It is found in the cell surface. Precursor of non-enzymatic components of the classical, lectin and GZMK complement pathways, which consist in a cascade of proteins that leads to phagocytosis and breakdown of pathogens and signaling that strengthens the adaptive immune system. Functionally, non-enzymatic component of C3 and C5 convertases. Generated following cleavage by complement proteases (C1S, MASP2 or GZMK, depending on the complement pathway), it covalently attaches to the surface of pathogens, where it acts as an opsonin that marks the surface of antigens for removal. It then recruits the serine protease complement C2b to form the C3 and C5 convertases, which cleave and activate C3 and C5, respectively, the next components of the complement pathways. Complement C4b-A isotype is responsible for effective binding to form amide bonds with immune aggregates or protein antigens, while complement C4b-B isotype catalyzes the transacylation of the thioester carbonyl group to form ester bonds with carbohydrate antigens. Its function is as follows. Putative humoral mediator released following cleavage by complement proteases (C1S, MASP2 or GZMK, depending on the complement pathway). While it is strongly similar to anaphylatoxins, its role is unclear. Was reported to act as a mediator of local inflammatory process; however these effects were probably due to contamination with C3a and/C5a anaphylatoxins in biological assays. This chain is Complement C4-B, found in Mus musculus (Mouse).